The sequence spans 228 residues: MPAFFVTGTDTEIGKTTIAAGLLHAARRAGLSTAAAKPVASGCEPTAQGLRNGDALALLGQCSLALAYEQVNPLAFAPAIAPHLAAREAGVELSAARLHEAVREVLALQADLTLVEGAGGWRVPLQGRENLSDLARLLALPVVLVVGVRLGCINHALLSAEAILGDGLALAGWVANVVDPATSRLEENLATLAERLPAPCLGRVPRLEEATPAAVAAHLDLRPLGIGL.

12 to 17 (EIGKTT) is a binding site for ATP. T16 provides a ligand contact to Mg(2+). Residue K37 is part of the active site. Position 41 (S41) interacts with substrate. ATP-binding positions include D54, 116–119 (EGAG), and 205–207 (PRL). D54 and E116 together coordinate Mg(2+).

The protein belongs to the dethiobiotin synthetase family. In terms of assembly, homodimer. Requires Mg(2+) as cofactor.

It localises to the cytoplasm. The enzyme catalyses (7R,8S)-7,8-diammoniononanoate + CO2 + ATP = (4R,5S)-dethiobiotin + ADP + phosphate + 3 H(+). Its pathway is cofactor biosynthesis; biotin biosynthesis; biotin from 7,8-diaminononanoate: step 1/2. Its function is as follows. Catalyzes a mechanistically unusual reaction, the ATP-dependent insertion of CO2 between the N7 and N8 nitrogen atoms of 7,8-diaminopelargonic acid (DAPA, also called 7,8-diammoniononanoate) to form a ureido ring. This Pseudomonas aeruginosa (strain UCBPP-PA14) protein is ATP-dependent dethiobiotin synthetase BioD.